A 247-amino-acid polypeptide reads, in one-letter code: Pyridoxine 5'-phosphate synthase (247 aa).

Position 9 (N9) interacts with 3-amino-2-oxopropyl phosphate. 11 to 12 (DH) is a 1-deoxy-D-xylulose 5-phosphate binding site. A 3-amino-2-oxopropyl phosphate-binding site is contributed by R20. The active-site Proton acceptor is the H45. 1-deoxy-D-xylulose 5-phosphate is bound by residues R47 and H52. The active-site Proton acceptor is the E72. T102 contributes to the 1-deoxy-D-xylulose 5-phosphate binding site. The active-site Proton donor is H193. 3-amino-2-oxopropyl phosphate-binding positions include G194 and 215-216 (GH).

This sequence belongs to the PNP synthase family. Homooctamer; tetramer of dimers.

It is found in the cytoplasm. It carries out the reaction 3-amino-2-oxopropyl phosphate + 1-deoxy-D-xylulose 5-phosphate = pyridoxine 5'-phosphate + phosphate + 2 H2O + H(+). Its pathway is cofactor biosynthesis; pyridoxine 5'-phosphate biosynthesis; pyridoxine 5'-phosphate from D-erythrose 4-phosphate: step 5/5. Its function is as follows. Catalyzes the complicated ring closure reaction between the two acyclic compounds 1-deoxy-D-xylulose-5-phosphate (DXP) and 3-amino-2-oxopropyl phosphate (1-amino-acetone-3-phosphate or AAP) to form pyridoxine 5'-phosphate (PNP) and inorganic phosphate. The chain is Pyridoxine 5'-phosphate synthase from Blochmanniella floridana.